Reading from the N-terminus, the 250-residue chain is Cholesterol ring-cleaving hydrolase IpdB subunit (250 aa).

The protein belongs to the 3-oxoacid CoA-transferase subunit B family. As to quaternary structure, heterotetramer composed of 2 IpdA subunits and 2 IpdB subunits.

The catalysed reaction is (3E)-2-(2-carboxylatoethyl)-3-methyl-6-oxocyclohex-1-ene-1-carboxyl-CoA + H2O = 6-methyl-3,7-dioxodecanedioyl-CoA. Its pathway is steroid metabolism; cholesterol degradation. Involved in the final steps of cholesterol and steroid degradation. Opens the last steroid ring of cholesterol by catalyzing the hydrolysis of (3E)-2-(2-carboxylatoethyl)-3-methyl-6-oxocyclohex-1-ene-1-carboxyl-CoA (COCHEA-CoA) to 6-methyl-3,7-dioxodecanedioyl-CoA (MeDODA-CoA). The chain is Cholesterol ring-cleaving hydrolase IpdB subunit from Mycobacterium bovis (strain ATCC BAA-935 / AF2122/97).